Reading from the N-terminus, the 98-residue chain is Large ribosomal subunit protein uL23 (98 aa).

This sequence belongs to the universal ribosomal protein uL23 family. Part of the 50S ribosomal subunit. Contacts protein L29, and trigger factor when it is bound to the ribosome.

Its function is as follows. One of the early assembly proteins it binds 23S rRNA. One of the proteins that surrounds the polypeptide exit tunnel on the outside of the ribosome. Forms the main docking site for trigger factor binding to the ribosome. The chain is Large ribosomal subunit protein uL23 from Bordetella bronchiseptica (strain ATCC BAA-588 / NCTC 13252 / RB50) (Alcaligenes bronchisepticus).